The sequence spans 366 residues: Mitochondrial division protein fszB (366 aa).

Residues 70–74 (GGGGN), 157–159 (GTG), glutamate 190, and aspartate 238 each bind GTP.

This sequence belongs to the FtsZ family.

It is found in the mitochondrion. Functionally, probably involved in mitochondrion division process. Binds to and hydrolyzes GTP. The polypeptide is Mitochondrial division protein fszB (fszB) (Dictyostelium discoideum (Social amoeba)).